Reading from the N-terminus, the 305-residue chain is Methionyl-tRNA formyltransferase (305 aa).

A (6S)-5,6,7,8-tetrahydrofolate-binding site is contributed by 108 to 111 (SLLP).

It belongs to the Fmt family.

The catalysed reaction is L-methionyl-tRNA(fMet) + (6R)-10-formyltetrahydrofolate = N-formyl-L-methionyl-tRNA(fMet) + (6S)-5,6,7,8-tetrahydrofolate + H(+). In terms of biological role, attaches a formyl group to the free amino group of methionyl-tRNA(fMet). The formyl group appears to play a dual role in the initiator identity of N-formylmethionyl-tRNA by promoting its recognition by IF2 and preventing the misappropriation of this tRNA by the elongation apparatus. In Thermus thermophilus (strain ATCC BAA-163 / DSM 7039 / HB27), this protein is Methionyl-tRNA formyltransferase.